Consider the following 163-residue polypeptide: uncharacterized protein (163 aa).

Residues 7–162 form the N-acetyltransferase domain; sequence ISISAVKLPQ…NVVYMRLEMS (156 aa).

Belongs to the acetyltransferase family.

It localises to the cytoplasm. The protein resides in the nucleus. This is an uncharacterized protein from Schizosaccharomyces pombe (strain 972 / ATCC 24843) (Fission yeast).